Consider the following 267-residue polypeptide: L-aspartate dehydrogenase (267 aa).

NAD(+) contacts are provided by Ala-124 and Asn-190. His-218 is an active-site residue.

This sequence belongs to the L-aspartate dehydrogenase family.

The enzyme catalyses L-aspartate + NADP(+) + H2O = oxaloacetate + NH4(+) + NADPH + H(+). It carries out the reaction L-aspartate + NAD(+) + H2O = oxaloacetate + NH4(+) + NADH + H(+). Its pathway is cofactor biosynthesis; NAD(+) biosynthesis; iminoaspartate from L-aspartate (dehydrogenase route): step 1/1. Specifically catalyzes the NAD or NADP-dependent dehydrogenation of L-aspartate to iminoaspartate. This chain is L-aspartate dehydrogenase, found in Methanococcus maripaludis (strain C7 / ATCC BAA-1331).